Consider the following 299-residue polypeptide: Acetylglutamate kinase (299 aa).

Substrate-binding positions include 68 to 69 (GG), arginine 90, and asparagine 195.

The protein belongs to the acetylglutamate kinase family. ArgB subfamily.

The protein resides in the cytoplasm. It catalyses the reaction N-acetyl-L-glutamate + ATP = N-acetyl-L-glutamyl 5-phosphate + ADP. It functions in the pathway amino-acid biosynthesis; L-arginine biosynthesis; N(2)-acetyl-L-ornithine from L-glutamate: step 2/4. In terms of biological role, catalyzes the ATP-dependent phosphorylation of N-acetyl-L-glutamate. In Erythrobacter litoralis (strain HTCC2594), this protein is Acetylglutamate kinase.